The primary structure comprises 486 residues: Probable cytosol aminopeptidase (486 aa).

It belongs to the peptidase M17 family. Requires Mn(2+) as cofactor.

It is found in the cytoplasm. The catalysed reaction is Release of an N-terminal amino acid, Xaa-|-Yaa-, in which Xaa is preferably Leu, but may be other amino acids including Pro although not Arg or Lys, and Yaa may be Pro. Amino acid amides and methyl esters are also readily hydrolyzed, but rates on arylamides are exceedingly low.. It carries out the reaction Release of an N-terminal amino acid, preferentially leucine, but not glutamic or aspartic acids.. Presumably involved in the processing and regular turnover of intracellular proteins. Catalyzes the removal of unsubstituted N-terminal amino acids from various peptides. The protein is Probable cytosol aminopeptidase (pepA) of Synechococcus elongatus (strain ATCC 33912 / PCC 7942 / FACHB-805) (Anacystis nidulans R2).